The sequence spans 460 residues: 25S rRNA (cytosine-C(5))-methyltransferase rcm1 (460 aa).

Residues 223-229 (CAAPGNK), E246, D273, and D293 contribute to the S-adenosyl-L-methionine site. Residue C350 is the Nucleophile of the active site. The span at 430–439 (KMYKNDDDTK) shows a compositional bias: basic and acidic residues. Residues 430-460 (KMYKNDDDTKKRKRKKKKKEVKKKARIQGEE) form a disordered region. The span at 440 to 460 (KRKRKKKKKEVKKKARIQGEE) shows a compositional bias: basic residues.

This sequence belongs to the class I-like SAM-binding methyltransferase superfamily. RsmB/NOP family. In terms of assembly, interacts with trm112.

The protein resides in the nucleus. The protein localises to the nucleolus. The enzyme catalyses a cytidine in 25S rRNA + S-adenosyl-L-methionine = a 5-methylcytidine in 25S rRNA + S-adenosyl-L-homocysteine + H(+). Functionally, S-adenosyl-L-methionine-dependent methyltransferase that specifically methylates the C(5) position of a cytosine in 25S rRNA. The chain is 25S rRNA (cytosine-C(5))-methyltransferase rcm1 (rcm1) from Schizosaccharomyces pombe (strain 972 / ATCC 24843) (Fission yeast).